A 214-amino-acid polypeptide reads, in one-letter code: MQNYKQEFIKFALSRNVLRFGEFTLKSGRVSPYFFNAGLFNTGADLARLGEFYASAIQASGLNYDVIFGPAYKGIPIGTTVSVALFNKFNLDKPVCFNRKEAKDHGEGGNLIGSPLQGRILLVDDVITAGTAIREAMDIIAANNARLAAVVIALNRKERGKGELSAIQEVERDYRCDVLSIIDLDDLMQFIENEPEYSQYLPAMKAYREQYGVA.

Residue Lys-26 coordinates 5-phospho-alpha-D-ribose 1-diphosphate. 34–35 (FF) is an orotate binding site. 5-phospho-alpha-D-ribose 1-diphosphate is bound by residues 72–73 (YK), Arg-99, Lys-100, Lys-103, His-105, and 124–132 (DDVITAGTA). 2 residues coordinate orotate: Thr-128 and Arg-156.

Belongs to the purine/pyrimidine phosphoribosyltransferase family. PyrE subfamily. In terms of assembly, homodimer. The cofactor is Mg(2+).

The enzyme catalyses orotidine 5'-phosphate + diphosphate = orotate + 5-phospho-alpha-D-ribose 1-diphosphate. It functions in the pathway pyrimidine metabolism; UMP biosynthesis via de novo pathway; UMP from orotate: step 1/2. In terms of biological role, catalyzes the transfer of a ribosyl phosphate group from 5-phosphoribose 1-diphosphate to orotate, leading to the formation of orotidine monophosphate (OMP). The polypeptide is Orotate phosphoribosyltransferase (Mannheimia succiniciproducens (strain KCTC 0769BP / MBEL55E)).